A 263-amino-acid polypeptide reads, in one-letter code: Hydroxyethylthiazole kinase (263 aa).

Met39 contacts substrate. Lys115 and Thr160 together coordinate ATP. Position 187 (Gly187) interacts with substrate.

It belongs to the Thz kinase family. Mg(2+) is required as a cofactor.

It catalyses the reaction 5-(2-hydroxyethyl)-4-methylthiazole + ATP = 4-methyl-5-(2-phosphooxyethyl)-thiazole + ADP + H(+). The protein operates within cofactor biosynthesis; thiamine diphosphate biosynthesis; 4-methyl-5-(2-phosphoethyl)-thiazole from 5-(2-hydroxyethyl)-4-methylthiazole: step 1/1. Functionally, catalyzes the phosphorylation of the hydroxyl group of 4-methyl-5-beta-hydroxyethylthiazole (THZ). This chain is Hydroxyethylthiazole kinase, found in Staphylococcus aureus (strain JH9).